The chain runs to 85 residues: Putative membrane protein insertion efficiency factor (85 aa).

Belongs to the UPF0161 family.

It is found in the cell membrane. Could be involved in insertion of integral membrane proteins into the membrane. This Baumannia cicadellinicola subsp. Homalodisca coagulata protein is Putative membrane protein insertion efficiency factor.